Consider the following 323-residue polypeptide: tRNA dimethylallyltransferase (323 aa).

Residue 12-19 (GPTAAGKT) participates in ATP binding. 14 to 19 (TAAGKT) contacts substrate. Interaction with substrate tRNA stretches follow at residues 37–40 (DSAL) and 161–165 (QRLIR).

This sequence belongs to the IPP transferase family. As to quaternary structure, monomer. Mg(2+) is required as a cofactor.

The catalysed reaction is adenosine(37) in tRNA + dimethylallyl diphosphate = N(6)-dimethylallyladenosine(37) in tRNA + diphosphate. Functionally, catalyzes the transfer of a dimethylallyl group onto the adenine at position 37 in tRNAs that read codons beginning with uridine, leading to the formation of N6-(dimethylallyl)adenosine (i(6)A). This Pseudomonas syringae pv. syringae (strain B728a) protein is tRNA dimethylallyltransferase.